We begin with the raw amino-acid sequence, 145 residues long: NADH dehydrogenase [ubiquinone] 1 alpha subcomplex subunit 12 (145 aa).

Position 1 is an N-acetylmethionine (Met1).

Belongs to the complex I NDUFA12 subunit family. Complex I is composed of 45 different subunits.

It localises to the mitochondrion inner membrane. Accessory subunit of the mitochondrial membrane respiratory chain NADH dehydrogenase (Complex I), that is believed not to be involved in catalysis. Complex I functions in the transfer of electrons from NADH to the respiratory chain. The immediate electron acceptor for the enzyme is believed to be ubiquinone. The sequence is that of NADH dehydrogenase [ubiquinone] 1 alpha subcomplex subunit 12 (NDUFA12) from Bos taurus (Bovine).